A 175-amino-acid polypeptide reads, in one-letter code: Crossover junction endodeoxyribonuclease RuvC (175 aa).

Residues D8, E68, and D140 contribute to the active site. Residues D8, E68, and D140 each contribute to the Mg(2+) site.

The protein belongs to the RuvC family. As to quaternary structure, homodimer which binds Holliday junction (HJ) DNA. The HJ becomes 2-fold symmetrical on binding to RuvC with unstacked arms; it has a different conformation from HJ DNA in complex with RuvA. In the full resolvosome a probable DNA-RuvA(4)-RuvB(12)-RuvC(2) complex forms which resolves the HJ. It depends on Mg(2+) as a cofactor.

It localises to the cytoplasm. The catalysed reaction is Endonucleolytic cleavage at a junction such as a reciprocal single-stranded crossover between two homologous DNA duplexes (Holliday junction).. The RuvA-RuvB-RuvC complex processes Holliday junction (HJ) DNA during genetic recombination and DNA repair. Endonuclease that resolves HJ intermediates. Cleaves cruciform DNA by making single-stranded nicks across the HJ at symmetrical positions within the homologous arms, yielding a 5'-phosphate and a 3'-hydroxyl group; requires a central core of homology in the junction. The consensus cleavage sequence is 5'-(A/T)TT(C/G)-3'. Cleavage occurs on the 3'-side of the TT dinucleotide at the point of strand exchange. HJ branch migration catalyzed by RuvA-RuvB allows RuvC to scan DNA until it finds its consensus sequence, where it cleaves and resolves the cruciform DNA. This Pseudomonas fluorescens (strain Pf0-1) protein is Crossover junction endodeoxyribonuclease RuvC.